Consider the following 355-residue polypeptide: Uroporphyrinogen decarboxylase (355 aa).

Residues 36-40 (RQAGR), D85, Y160, S215, and H334 each bind substrate.

The protein belongs to the uroporphyrinogen decarboxylase family. In terms of assembly, homodimer.

The protein localises to the cytoplasm. It catalyses the reaction uroporphyrinogen III + 4 H(+) = coproporphyrinogen III + 4 CO2. The protein operates within porphyrin-containing compound metabolism; protoporphyrin-IX biosynthesis; coproporphyrinogen-III from 5-aminolevulinate: step 4/4. Catalyzes the decarboxylation of four acetate groups of uroporphyrinogen-III to yield coproporphyrinogen-III. In Rhodococcus erythropolis (strain PR4 / NBRC 100887), this protein is Uroporphyrinogen decarboxylase.